A 151-amino-acid chain; its full sequence is SsrA-binding protein (151 aa).

This sequence belongs to the SmpB family.

It localises to the cytoplasm. Functionally, required for rescue of stalled ribosomes mediated by trans-translation. Binds to transfer-messenger RNA (tmRNA), required for stable association of tmRNA with ribosomes. tmRNA and SmpB together mimic tRNA shape, replacing the anticodon stem-loop with SmpB. tmRNA is encoded by the ssrA gene; the 2 termini fold to resemble tRNA(Ala) and it encodes a 'tag peptide', a short internal open reading frame. During trans-translation Ala-aminoacylated tmRNA acts like a tRNA, entering the A-site of stalled ribosomes, displacing the stalled mRNA. The ribosome then switches to translate the ORF on the tmRNA; the nascent peptide is terminated with the 'tag peptide' encoded by the tmRNA and targeted for degradation. The ribosome is freed to recommence translation, which seems to be the essential function of trans-translation. The polypeptide is SsrA-binding protein (Flavobacterium johnsoniae (strain ATCC 17061 / DSM 2064 / JCM 8514 / BCRC 14874 / CCUG 350202 / NBRC 14942 / NCIMB 11054 / UW101) (Cytophaga johnsonae)).